The following is a 226-amino-acid chain: Leucyl/phenylalanyl-tRNA--protein transferase (226 aa).

It belongs to the L/F-transferase family.

The protein resides in the cytoplasm. It carries out the reaction N-terminal L-lysyl-[protein] + L-leucyl-tRNA(Leu) = N-terminal L-leucyl-L-lysyl-[protein] + tRNA(Leu) + H(+). The catalysed reaction is N-terminal L-arginyl-[protein] + L-leucyl-tRNA(Leu) = N-terminal L-leucyl-L-arginyl-[protein] + tRNA(Leu) + H(+). The enzyme catalyses L-phenylalanyl-tRNA(Phe) + an N-terminal L-alpha-aminoacyl-[protein] = an N-terminal L-phenylalanyl-L-alpha-aminoacyl-[protein] + tRNA(Phe). Functions in the N-end rule pathway of protein degradation where it conjugates Leu, Phe and, less efficiently, Met from aminoacyl-tRNAs to the N-termini of proteins containing an N-terminal arginine or lysine. The chain is Leucyl/phenylalanyl-tRNA--protein transferase from Pseudomonas fluorescens (strain SBW25).